Here is a 201-residue protein sequence, read N- to C-terminus: Adenylyl-sulfate kinase (201 aa).

Position 35-42 (35-42 (GLSGSGKS)) interacts with ATP. Ser109 serves as the catalytic Phosphoserine intermediate.

The protein belongs to the APS kinase family.

The catalysed reaction is adenosine 5'-phosphosulfate + ATP = 3'-phosphoadenylyl sulfate + ADP + H(+). It functions in the pathway sulfur metabolism; hydrogen sulfide biosynthesis; sulfite from sulfate: step 2/3. Catalyzes the synthesis of activated sulfate. The protein is Adenylyl-sulfate kinase of Shigella flexneri.